Consider the following 308-residue polypeptide: Ribosomal RNA small subunit methyltransferase H (308 aa).

S-adenosyl-L-methionine contacts are provided by residues 35-37 (GGH), D55, F79, D100, and Q107.

It belongs to the methyltransferase superfamily. RsmH family.

It localises to the cytoplasm. The enzyme catalyses cytidine(1402) in 16S rRNA + S-adenosyl-L-methionine = N(4)-methylcytidine(1402) in 16S rRNA + S-adenosyl-L-homocysteine + H(+). Specifically methylates the N4 position of cytidine in position 1402 (C1402) of 16S rRNA. This Dechloromonas aromatica (strain RCB) protein is Ribosomal RNA small subunit methyltransferase H.